The primary structure comprises 459 residues: Ceramide glucosyltransferase 3 (459 aa).

Residues 77–97 (LIAIVGFVFVFCLYLIHIIAL) form a helical membrane-spanning segment. A short sequence motif (D1) is located at residue D156. Position 208 (D208) is a short sequence motif, D2. Position 302 (D302) is a short sequence motif, D3. D302 functions as the Proton acceptor in the catalytic mechanism. The (Q/R)XXRW signature appears at 338 to 342 (RICRW). 2 helical membrane passes run 367–387 (LIMA…ILIL) and 415–435 (FMLI…KALL).

This sequence belongs to the glycosyltransferase 2 family. As to expression, expressed in pharyngeal intestinal valve, intestinal rectal valve and hypodermis.

Its subcellular location is the membrane. It catalyses the reaction an N-acylsphing-4-enine + UDP-alpha-D-glucose = a beta-D-glucosyl-(1&lt;-&gt;1')-N-acylsphing-4-enine + UDP + H(+). It carries out the reaction an N-acyl-15-methylhexadecasphing-4-enine + UDP-alpha-D-glucose = an N-acyl-1-beta-D-glucosyl-15-methylhexadecasphing-4-enine + UDP + H(+). Its pathway is lipid metabolism; sphingolipid metabolism. In terms of biological role, catalyzes the first glycosylation step in glycosphingolipid biosynthesis, the transfer of glucose to ceramide to produce glucosylceramides (GlcCer). GlcCer are known to contribute to the physical properties and physiological functions of membranes and may regulate signal transduction. Seems to be the major active form in the nematode. Only branched-chain sphingoid bases like 15-methylhexadecasphing-4-enine are used for generating complex sphingolipids in Caenorhabditis elegans. Together with cgt-1, plays a role in the trafficking of proteins such as mig-14 to the cell membrane in intestinal cells. The sequence is that of Ceramide glucosyltransferase 3 from Caenorhabditis elegans.